The chain runs to 135 residues: Small ribosomal subunit protein bS16 (135 aa).

Residues 82–135 (RPAETVGKAKQAAKREADAKQAAKEAAEAKAAAADEKAAEAEASDSAESESTEG) are disordered. The segment covering 94–121 (AKREADAKQAAKEAAEAKAAAADEKAAE) has biased composition (basic and acidic residues). Positions 123 to 135 (EASDSAESESTEG) are enriched in acidic residues.

This sequence belongs to the bacterial ribosomal protein bS16 family.

This is Small ribosomal subunit protein bS16 from Synechococcus sp. (strain CC9605).